Consider the following 268-residue polypeptide: Hydroxyethylthiazole kinase (268 aa).

A substrate-binding site is contributed by Met45. Residues Arg121 and Thr167 each contribute to the ATP site. Position 194 (Gly194) interacts with substrate.

The protein belongs to the Thz kinase family. Mg(2+) is required as a cofactor.

It carries out the reaction 5-(2-hydroxyethyl)-4-methylthiazole + ATP = 4-methyl-5-(2-phosphooxyethyl)-thiazole + ADP + H(+). It functions in the pathway cofactor biosynthesis; thiamine diphosphate biosynthesis; 4-methyl-5-(2-phosphoethyl)-thiazole from 5-(2-hydroxyethyl)-4-methylthiazole: step 1/1. In terms of biological role, catalyzes the phosphorylation of the hydroxyl group of 4-methyl-5-beta-hydroxyethylthiazole (THZ). The protein is Hydroxyethylthiazole kinase of Bacillus cereus (strain ZK / E33L).